A 360-amino-acid polypeptide reads, in one-letter code: Chorismate synthase (360 aa).

Residue arginine 48 coordinates NADP(+). Residues arginine 125–serine 127, asparagine 242–alanine 243, glycine 286, lysine 301–serine 305, and arginine 327 each bind FMN.

Belongs to the chorismate synthase family. In terms of assembly, homotetramer. The cofactor is FMNH2.

It carries out the reaction 5-O-(1-carboxyvinyl)-3-phosphoshikimate = chorismate + phosphate. It participates in metabolic intermediate biosynthesis; chorismate biosynthesis; chorismate from D-erythrose 4-phosphate and phosphoenolpyruvate: step 7/7. Its function is as follows. Catalyzes the anti-1,4-elimination of the C-3 phosphate and the C-6 proR hydrogen from 5-enolpyruvylshikimate-3-phosphate (EPSP) to yield chorismate, which is the branch point compound that serves as the starting substrate for the three terminal pathways of aromatic amino acid biosynthesis. This reaction introduces a second double bond into the aromatic ring system. The sequence is that of Chorismate synthase from Pelagibacter ubique (strain HTCC1062).